The following is a 145-amino-acid chain: Basic phospholipase A2 KPA2 (145 aa).

A signal peptide spans 1–19 (MYPAHLLVLVAVCVSLLGA). Positions 20–27 (ANIPPQPL) are excised as a propeptide. Cystine bridges form between Cys38–Cys97, Cys52–Cys144, Cys54–Cys70, Cys69–Cys125, Cys76–Cys118, Cys86–Cys111, and Cys104–Cys116. 3 residues coordinate Ca(2+): Tyr53, Gly55, and Gly57. His73 is an active-site residue. Residue Asp74 coordinates Ca(2+). Residue Asp119 is part of the active site.

This sequence belongs to the phospholipase A2 family. Group I subfamily. D49 sub-subfamily. As to quaternary structure, monomer. Ca(2+) serves as cofactor. As to expression, expressed by the venom gland.

Its subcellular location is the secreted. It catalyses the reaction a 1,2-diacyl-sn-glycero-3-phosphocholine + H2O = a 1-acyl-sn-glycero-3-phosphocholine + a fatty acid + H(+). In terms of biological role, snake venom phospholipase A2 (PLA2) that shows anticoagulant and neurotoxic activities. PLA2 catalyzes the calcium-dependent hydrolysis of the 2-acyl groups in 3-sn-phosphoglycerides. This Bungarus caeruleus (Indian krait) protein is Basic phospholipase A2 KPA2.